The sequence spans 290 residues: 4-hydroxy-3-methylbut-2-enyl diphosphate reductase (290 aa).

Residue Cys-12 coordinates [4Fe-4S] cluster. (2E)-4-hydroxy-3-methylbut-2-enyl diphosphate contacts are provided by His-50 and His-83. Positions 50 and 83 each coordinate dimethylallyl diphosphate. Residues His-50 and His-83 each contribute to the isopentenyl diphosphate site. Position 105 (Cys-105) interacts with [4Fe-4S] cluster. A (2E)-4-hydroxy-3-methylbut-2-enyl diphosphate-binding site is contributed by His-133. His-133 contributes to the dimethylallyl diphosphate binding site. His-133 lines the isopentenyl diphosphate pocket. The active-site Proton donor is Glu-135. Thr-173 is a binding site for (2E)-4-hydroxy-3-methylbut-2-enyl diphosphate. Position 202 (Cys-202) interacts with [4Fe-4S] cluster. Residues Ser-230, Asn-232, and Ser-274 each contribute to the (2E)-4-hydroxy-3-methylbut-2-enyl diphosphate site. Dimethylallyl diphosphate is bound by residues Ser-230, Asn-232, and Ser-274. Isopentenyl diphosphate-binding residues include Ser-230, Asn-232, and Ser-274.

It belongs to the IspH family. The cofactor is [4Fe-4S] cluster.

The enzyme catalyses isopentenyl diphosphate + 2 oxidized [2Fe-2S]-[ferredoxin] + H2O = (2E)-4-hydroxy-3-methylbut-2-enyl diphosphate + 2 reduced [2Fe-2S]-[ferredoxin] + 2 H(+). The catalysed reaction is dimethylallyl diphosphate + 2 oxidized [2Fe-2S]-[ferredoxin] + H2O = (2E)-4-hydroxy-3-methylbut-2-enyl diphosphate + 2 reduced [2Fe-2S]-[ferredoxin] + 2 H(+). Its pathway is isoprenoid biosynthesis; dimethylallyl diphosphate biosynthesis; dimethylallyl diphosphate from (2E)-4-hydroxy-3-methylbutenyl diphosphate: step 1/1. The protein operates within isoprenoid biosynthesis; isopentenyl diphosphate biosynthesis via DXP pathway; isopentenyl diphosphate from 1-deoxy-D-xylulose 5-phosphate: step 6/6. Catalyzes the conversion of 1-hydroxy-2-methyl-2-(E)-butenyl 4-diphosphate (HMBPP) into a mixture of isopentenyl diphosphate (IPP) and dimethylallyl diphosphate (DMAPP). Acts in the terminal step of the DOXP/MEP pathway for isoprenoid precursor biosynthesis. In Nitratidesulfovibrio vulgaris (strain DP4) (Desulfovibrio vulgaris), this protein is 4-hydroxy-3-methylbut-2-enyl diphosphate reductase.